The following is a 367-amino-acid chain: Pyrimidine monooxygenase RutA (367 aa).

FMN-binding positions include 49 to 50, asparagine 115, glutamate 124, 140 to 141, and serine 190; these read IK and RY.

It belongs to the NtaA/SnaA/DszA monooxygenase family. RutA subfamily.

It carries out the reaction uracil + FMNH2 + NADH + O2 = (Z)-3-ureidoacrylate + FMN + NAD(+) + H2O + H(+). It catalyses the reaction thymine + FMNH2 + NADH + O2 = (Z)-2-methylureidoacrylate + FMN + NAD(+) + H2O + H(+). Its function is as follows. Catalyzes the pyrimidine ring opening between N-3 and C-4 by an unusual flavin hydroperoxide-catalyzed mechanism, adding oxygen atoms in the process to yield ureidoacrylate peracid, that immediately reacts with FMN forming ureidoacrylate and FMN-N(5)-oxide. The FMN-N(5)-oxide reacts spontaneously with NADH to produce FMN. Requires the flavin reductase RutF to regenerate FMN in vivo. The polypeptide is Pyrimidine monooxygenase RutA (Yersinia enterocolitica serotype O:8 / biotype 1B (strain NCTC 13174 / 8081)).